Here is a 312-residue protein sequence, read N- to C-terminus: Apolipoprotein E (312 aa).

The N-terminal stretch at 1–18 (MKALWALLLVPLLTGCLA) is a signal peptide. 8 consecutive repeat copies span residues 72–93 (VLMEDTMTEVKAYKKELEEQLG), 94–115 (PVAEETRARLAKEVQAAQARLG), 116–137 (ADMEDLRNRLGQYRNEVNTMLG), 138–159 (QSTEELRSRLSTHLRKMRKRLM), 160–181 (RDADDLQKRLAVYKAGAQEGAE), 182–203 (RGVSAIRERLGPLVEQGRQRTA), 204–225 (NLGAGAAQPLRDRAQALSDRIR), and 226–247 (GRLEEVGNQARDRLEEVREQME). An 8 X 22 AA approximate tandem repeats region spans residues 72 to 247 (VLMEDTMTEV…RLEEVREQME (176 aa)). A Methionine sulfoxide modification is found at methionine 135. Serine 139 is modified (phosphoserine). The tract at residues 150–160 (HLRKMRKRLMR) is LDL and other lipoprotein receptors binding. The segment at 150–160 (HLRKMRKRLMR) is LDL receptor binding. A heparin-binding site is contributed by 154-157 (MRKR). The lipid-binding and lipoprotein association stretch occupies residues 202-282 (TANLGAGAAQ…GWFEPLVEDM (81 aa)). Heparin is bound at residue 221-228 (SDRIRGRL). The interval 258–312 (QQIRLQAEIFQARIKGWFEPLVEDMQRQWANLMEKIQASVATNSIASTTVPLENQ) is homooligomerization. The interval 270–282 (RIKGWFEPLVEDM) is specificity for association with VLDL.

It belongs to the apolipoprotein A1/A4/E family. In terms of assembly, homotetramer. May interact with ABCA1; functionally associated with ABCA1 in the biogenesis of HDLs. May interact with APP/A4 amyloid-beta peptide; the interaction is extremely stable in vitro but its physiological significance is unclear. May interact with MAPT. May interact with MAP2. In the cerebrospinal fluid, interacts with secreted SORL1. Interacts with PMEL; this allows the loading of PMEL luminal fragment on ILVs to induce fibril nucleation. APOE exists as multiple glycosylated and sialylated glycoforms within cells and in plasma. The extent of glycosylation and sialylation are tissue and context specific. Post-translationally, glycated in plasma VLDL. In terms of processing, phosphorylated by FAM20C in the extracellular medium.

Its subcellular location is the secreted. It is found in the extracellular space. The protein localises to the extracellular matrix. It localises to the extracellular vesicle. The protein resides in the endosome. Its subcellular location is the multivesicular body. Its function is as follows. APOE is an apolipoprotein, a protein associating with lipid particles, that mainly functions in lipoprotein-mediated lipid transport between organs via the plasma and interstitial fluids. APOE is a core component of plasma lipoproteins and is involved in their production, conversion and clearance. Apolipoproteins are amphipathic molecules that interact both with lipids of the lipoprotein particle core and the aqueous environment of the plasma. As such, APOE associates with chylomicrons, chylomicron remnants, very low density lipoproteins (VLDL) and intermediate density lipoproteins (IDL) but shows a preferential binding to high-density lipoproteins (HDL). It also binds a wide range of cellular receptors including the LDL receptor/LDLR and the very low-density lipoprotein receptor/VLDLR that mediate the cellular uptake of the APOE-containing lipoprotein particles. Finally, APOE also has a heparin-binding activity and binds heparan-sulfate proteoglycans on the surface of cells, a property that supports the capture and the receptor-mediated uptake of APOE-containing lipoproteins by cells. The sequence is that of Apolipoprotein E (Apoe) from Rattus norvegicus (Rat).